A 200-amino-acid chain; its full sequence is Protein GrpE (200 aa).

The protein belongs to the GrpE family. Homodimer.

It localises to the cytoplasm. Functionally, participates actively in the response to hyperosmotic and heat shock by preventing the aggregation of stress-denatured proteins, in association with DnaK and GrpE. It is the nucleotide exchange factor for DnaK and may function as a thermosensor. Unfolded proteins bind initially to DnaJ; upon interaction with the DnaJ-bound protein, DnaK hydrolyzes its bound ATP, resulting in the formation of a stable complex. GrpE releases ADP from DnaK; ATP binding to DnaK triggers the release of the substrate protein, thus completing the reaction cycle. Several rounds of ATP-dependent interactions between DnaJ, DnaK and GrpE are required for fully efficient folding. The protein is Protein GrpE of Mycoplasma mycoides subsp. mycoides SC (strain CCUG 32753 / NCTC 10114 / PG1).